Reading from the N-terminus, the 908-residue chain is Translation initiation factor IF-2 (908 aa).

Disordered stretches follow at residues 122–180 (PVVE…VDDA) and 203–267 (EKAR…AVKK). Residues 132–143 (VAAEPEVVEAPE) show a composition bias toward acidic residues. Residues 157–166 (EEPAAPAAPV) show a composition bias toward low complexity. Residues 223 to 248 (AKEDARPTKHVEDLAKLKKPHDKKDE) are compositionally biased toward basic and acidic residues. Positions 256–267 (KHNKKAGKAVKK) are enriched in basic residues. The 170-residue stretch at 409 to 578 (PRAPIVTVMG…ALQAELLELS (170 aa)) folds into the tr-type G domain. The interval 418–425 (GHVDHGKT) is G1. Position 418-425 (418-425 (GHVDHGKT)) interacts with GTP. The tract at residues 443–447 (GITQH) is G2. The segment at 464 to 467 (DTPG) is G3. Residues 464 to 468 (DTPGH) and 518 to 521 (NKMD) contribute to the GTP site. The G4 stretch occupies residues 518-521 (NKMD). A G5 region spans residues 554–556 (SAH).

It belongs to the TRAFAC class translation factor GTPase superfamily. Classic translation factor GTPase family. IF-2 subfamily.

The protein localises to the cytoplasm. One of the essential components for the initiation of protein synthesis. Protects formylmethionyl-tRNA from spontaneous hydrolysis and promotes its binding to the 30S ribosomal subunits. Also involved in the hydrolysis of GTP during the formation of the 70S ribosomal complex. This chain is Translation initiation factor IF-2, found in Saccharophagus degradans (strain 2-40 / ATCC 43961 / DSM 17024).